We begin with the raw amino-acid sequence, 489 residues long: Valine--tRNA ligase (489 aa).

Positions 482–486 (KMSKS) match the 'KMSKS' region motif. Lys-485 serves as a coordination point for ATP.

It belongs to the class-I aminoacyl-tRNA synthetase family.

The catalysed reaction is tRNA(Val) + L-valine + ATP = L-valyl-tRNA(Val) + AMP + diphosphate. The protein is Valine--tRNA ligase (VALS) of Trichomonas vaginalis.